Reading from the N-terminus, the 456-residue chain is NADH-quinone oxidoreductase subunit N (456 aa).

A run of 14 helical transmembrane segments spans residues Leu-6 to Ala-26, Val-45 to Phe-65, Thr-75 to Ala-95, Glu-97 to His-117, Ala-118 to Phe-138, Phe-151 to Ala-171, Trp-181 to Phe-201, Pro-220 to Leu-240, Leu-252 to Ala-272, Met-281 to Ala-301, Val-308 to Met-328, Gly-355 to Phe-375, Glu-382 to Ile-402, and Leu-426 to Ile-446.

The protein belongs to the complex I subunit 2 family. NDH-1 is composed of 14 different subunits. Subunits NuoA, H, J, K, L, M, N constitute the membrane sector of the complex.

The protein localises to the cell inner membrane. The catalysed reaction is a quinone + NADH + 5 H(+)(in) = a quinol + NAD(+) + 4 H(+)(out). NDH-1 shuttles electrons from NADH, via FMN and iron-sulfur (Fe-S) centers, to quinones in the respiratory chain. The immediate electron acceptor for the enzyme in this species is believed to be ubiquinone. Couples the redox reaction to proton translocation (for every two electrons transferred, four hydrogen ions are translocated across the cytoplasmic membrane), and thus conserves the redox energy in a proton gradient. This chain is NADH-quinone oxidoreductase subunit N, found in Rhodopseudomonas palustris (strain BisA53).